We begin with the raw amino-acid sequence, 122 residues long: Large ribosomal subunit protein uL14 (122 aa).

The protein belongs to the universal ribosomal protein uL14 family. Part of the 50S ribosomal subunit. Forms a cluster with proteins L3 and L19. In the 70S ribosome, L14 and L19 interact and together make contacts with the 16S rRNA in bridges B5 and B8.

Functionally, binds to 23S rRNA. Forms part of two intersubunit bridges in the 70S ribosome. This chain is Large ribosomal subunit protein uL14, found in Rickettsia typhi (strain ATCC VR-144 / Wilmington).